We begin with the raw amino-acid sequence, 270 residues long: Transcription factor bHLH113 (270 aa).

Residues 109–153 (CTVDKSTKSSTKKRTGTGNGQESDQNRKPGKKGKRNQEKSSVGIA) form a disordered region. Residues 144 to 193 (NQEKSSVGIAKVRKERLGERIAALQQLVSPYGKTDAASVLHEAMGYIKFL) enclose the bHLH domain.

As to quaternary structure, homodimer.

Its subcellular location is the nucleus. The sequence is that of Transcription factor bHLH113 (BHLH113) from Arabidopsis thaliana (Mouse-ear cress).